The primary structure comprises 917 residues: Serine/arginine repetitive matrix protein 1 (917 aa).

The residue at position 1 (Met-1) is an N-acetylmethionine. The interval 1-151 is necessary for DNA and RNA-binding; sequence MDAGFFRGTS…ASMKKQDEDK (151 aa). The tract at residues 1–156 is necessary for mRNA 3'-end cleavage and cytoplasmic accumulation; the sequence is MDAGFFRGTS…QDEDKDKRDK (156 aa). Arg-7 carries the citrulline modification. A PWI domain is found at 27–126; the sequence is QLKFAECLEK…AGIPSAFLEL (100 aa). Lys-127 participates in a covalent cross-link: Glycyl lysine isopeptide (Lys-Gly) (interchain with G-Cter in SUMO2). The segment covering 139-170 has biased composition (basic and acidic residues); it reads EKLASMKKQDEDKDKRDKEEKESSREKRERSR. The segment at 139–917 is disordered; sequence EKLASMKKQD…MRKAQVSPQS (779 aa). N6-acetyllysine is present on Lys-140. The segment covering 171–207 has biased composition (basic residues); it reads SPRRRKSRSPSPRRRSSPVRRERKRSHSRSPRHRTKS. A compositionally biased stretch (basic and acidic residues) spans 214-234; the sequence is PEKKEKTPELPEPSVKVKEPS. The residue at position 220 (Thr-220) is a Phosphothreonine. At Ser-227 the chain carries Phosphoserine. Lys-231 is covalently cross-linked (Glycyl lysine isopeptide (Lys-Gly) (interchain with G-Cter in SUMO1); alternate). Residue Lys-231 forms a Glycyl lysine isopeptide (Lys-Gly) (interchain with G-Cter in SUMO2); alternate linkage. Ser-234 and Ser-240 each carry phosphoserine. Position 241 is a phosphothreonine (Thr-241). Residues 246–275 are compositionally biased toward basic and acidic residues; the sequence is KVPKPEPIPEPKEPSPEKNSKKEKEKEKTR. Lys-249 is covalently cross-linked (Glycyl lysine isopeptide (Lys-Gly) (interchain with G-Cter in SUMO2)). The residue at position 260 (Ser-260) is a Phosphoserine. 2 stretches are compositionally biased toward basic residues: residues 276–329 and 336–351; these read PRSR…RTPP and PRHRRSRSPVRRRRRS. The necessary for speckles and matrix localization stretch occupies residues 300–702; sequence RRHRSRSRSY…NKRHSPSPRP (403 aa). Over residues 352–368 the composition is skewed to low complexity; sequence SASLSGSSSSSSSSRSR. Ser-389, Ser-391, Ser-393, and Ser-402 each carry phosphoserine. Residue Thr-406 is modified to Phosphothreonine. Residue Ser-414 is modified to Phosphoserine. The residue at position 416 (Thr-416) is a Phosphothreonine. Residues Ser-420, Ser-429, Ser-431, and Ser-436 each carry the phosphoserine modification. A compositionally biased stretch (polar residues) spans 428–438; sequence VSVSPGRTSGK. Residue Lys-447 forms a Glycyl lysine isopeptide (Lys-Gly) (interchain with G-Cter in SUMO2) linkage. Residues Ser-450 and Ser-452 each carry the phosphoserine modification. Residue Lys-459 forms a Glycyl lysine isopeptide (Lys-Gly) (interchain with G-Cter in SUMO2) linkage. Phosphoserine occurs at positions 463 and 465. Residue Lys-472 forms a Glycyl lysine isopeptide (Lys-Gly) (interchain with G-Cter in SUMO2) linkage. Ser-478 is subject to Phosphoserine. Low complexity predominate over residues 478–501; that stretch reads SVQQRRQYRRQNQQSSSDSGSSSS. The segment covering 503–518 has biased composition (basic and acidic residues); that stretch reads EDERPKRSHVKNGEVG. 7 positions are modified to phosphoserine: Ser-524, Ser-526, Ser-528, Ser-530, Ser-532, Ser-563, and Ser-565. The segment covering 557–574 has biased composition (basic residues); that stretch reads SGRRRRSPSPPPTRRRRS. Residue Thr-569 is modified to Phosphothreonine. Residues Ser-574 and Ser-576 each carry the phosphoserine modification. The span at 581 to 606 shows a compositional bias: basic residues; that stretch reads PRRRRTPTPPPRRRTPSPPPRRRSPS. Phosphothreonine occurs at positions 586, 588, and 595. A Phosphoserine modification is found at Ser-597. The span at 607-619 shows a compositional bias: low complexity; the sequence is PRRYSPPIQRRYS. Tyr-610 is subject to Phosphotyrosine. Ser-611, Ser-619, and Ser-621 each carry phosphoserine. Thr-628 is modified (phosphothreonine). 5 positions are modified to phosphoserine: Ser-630, Ser-640, Ser-642, Ser-650, and Ser-652. The span at 635–650 shows a compositional bias: basic residues; the sequence is PKRRASPSPPPKRRVS. Over residues 663–677 the composition is skewed to basic residues; it reads TKRRSPSLSSKHRKG. A compositionally biased stretch (pro residues) spans 699-713; sequence SPRPRAPQTSSPPPV. Phosphoserine occurs at positions 708, 709, 718, 720, 726, and 728. Low complexity-rich tracts occupy residues 714-732, 749-772, and 782-799; these read RRGASSSPQRRQSPSPSTR, AASPSPQSVRRVSSSRSVSGSPEP, and SPVQSQSPSTNWSPAVPV. Thr-731 is subject to Phosphothreonine. Phosphoserine is present on residues Ser-751, Ser-753, Ser-761, Ser-765, Ser-767, Ser-769, Ser-782, Ser-786, Ser-788, and Ser-790. Thr-791 is modified (phosphothreonine). 2 positions are modified to phosphoserine: Ser-794 and Ser-804. Thr-806 is subject to Phosphothreonine. Phosphoserine occurs at positions 808, 810, and 815. A compositionally biased stretch (basic residues) spans 822–847; sequence KKKKKKKDKKHKKDKKHKKHKKHKKE. A compositionally biased stretch (low complexity) spans 850 to 879; that stretch reads VAAAAAAAVTPAAIAAATTTLAQEEPVAAP. Lys-882 participates in a covalent cross-link: Glycyl lysine isopeptide (Lys-Gly) (interchain with G-Cter in SUMO2). Thr-885 is modified (phosphothreonine). Ser-887 carries the phosphoserine modification. Residues 895 to 905 show a composition bias toward basic and acidic residues; it reads DLEKHLREKAL. The residue at position 914 (Ser-914) is a Phosphoserine.

Belongs to the splicing factor SR family. In terms of assembly, identified in the spliceosome C complex. Found in a pre-mRNA splicing complex with SFRS4, SFRS5, SNRP70, SNRPA1, SRRM1 and SRRM2. Component of the minor spliceosome, which splices U12-type introns. Found in a pre-mRNA exonic splicing enhancer (ESE) complex with SNRP70, SNRPA1, SRRM1 and TRA2B/SFRS10. Found in a mRNA splicing-dependent exon junction complex (EJC) with DEK, PRPF8, NCBP1, RBM8A, RNPS1, SRRM1 and ALYREF/THOC4. Interacts with DDX39B, CPSF1, RBM8A, RNPS1, and ALYREF/THOC4. Seems to be a compound of RNA export complexes that are released from speckles in a ATP-dependent manner. In terms of processing, phosphorylated on multiple serine and threonine residues by DYRK3 during the G2-to-M transition, after the nuclear-envelope breakdown. Phosphorylation by DYRK3 promotes disassembly of nuclear speckles. Citrullinated by PADI4.

In terms of biological role, part of pre- and post-splicing multiprotein mRNP complexes. As a component of the minor spliceosome, involved in the splicing of U12-type introns in pre-mRNAs. Involved in numerous pre-mRNA processing events. Promotes constitutive and exonic splicing enhancer (ESE)-dependent splicing activation by bridging together sequence-specific (SR family proteins, SFRS4, SFRS5 and TRA2B/SFRS10) and basal snRNP (SNRP70 and SNRPA1) factors of the spliceosome. Stimulates mRNA 3'-end cleavage independently of the formation of an exon junction complex. Binds both pre-mRNA and spliced mRNA 20-25 nt upstream of exon-exon junctions. Binds RNA and DNA with low sequence specificity and has similar preference for either double- or single-stranded nucleic acid substrates. This is Serine/arginine repetitive matrix protein 1 (SRRM1) from Pongo abelii (Sumatran orangutan).